We begin with the raw amino-acid sequence, 699 residues long: Chitin synthase 7 (699 aa).

6 consecutive transmembrane segments (helical) span residues Ile-19–Leu-39, Ser-58–Leu-80, Leu-98–Ile-118, Phe-445–Ile-465, Leu-474–Gly-494, and Val-507–Ala-527. The segment at Ala-628–Glu-648 is disordered.

It belongs to the chitin synthase family. Class VI subfamily.

Its subcellular location is the cell membrane. It carries out the reaction [(1-&gt;4)-N-acetyl-beta-D-glucosaminyl](n) + UDP-N-acetyl-alpha-D-glucosamine = [(1-&gt;4)-N-acetyl-beta-D-glucosaminyl](n+1) + UDP + H(+). In terms of biological role, polymerizes chitin, a structural polymer of the cell wall and septum, by transferring the sugar moiety of UDP-GlcNAc to the non-reducing end of the growing chitin polymer. Plays a role in cell wall integrity. Required to successfully penetrate the host plants and thus plays a key role in pathogenicity. This is Chitin synthase 7 from Verticillium dahliae (strain VdLs.17 / ATCC MYA-4575 / FGSC 10137) (Verticillium wilt).